The following is a 204-amino-acid chain: Tetraspanin-13 (204 aa).

Over 1–19 (MVCGGFACSKNCLCALNLL) the chain is Cytoplasmic. A helical transmembrane segment spans residues 20 to 40 (YTLVSLLLIGIAAWGIGFGLI). The Extracellular portion of the chain corresponds to 41 to 44 (SSLR). Residues 45–65 (VVGVVIAVGIFLFLIALVGLI) traverse the membrane as a helical segment. At 66-72 (GAVKHHQ) the chain is on the cytoplasmic side. Residues 73 to 93 (VLLFFYMIILLLVFIVQFSVS) form a helical membrane-spanning segment. Residues 94-167 (CACLALNQEQ…IGRYAGEVLR (74 aa)) lie on the Extracellular side of the membrane. Residues Asn113 and Asn137 are each glycosylated (N-linked (GlcNAc...) asparagine). Ser143 carries the post-translational modification Phosphoserine. A helical membrane pass occupies residues 168 to 188 (FVGGIGLFFSFTEILGVWLTY). Over 189–204 (RYRNQKDPRANPSAFL) the chain is Cytoplasmic.

It belongs to the tetraspanin (TM4SF) family.

It is found in the membrane. This is Tetraspanin-13 (TSPAN13) from Bos taurus (Bovine).